A 216-amino-acid polypeptide reads, in one-letter code: Adenylate kinase (216 aa).

10–15 (GAGKGT) lines the ATP pocket. An NMP region spans residues 30-59 (STGDMFRAAIKEGTPLGLQAKEYMDRGDLV). AMP-binding positions include Thr-31, Arg-36, 57–59 (DLV), 85–88 (GFPR), and Gln-92. The segment at 126–163 (GRRICKNCGATYHLVFNPPAKSGVCDKCGGELYQRADD) is LID. Arg-127 serves as a coordination point for ATP. Positions 130 and 133 each coordinate Zn(2+). Position 136–137 (136–137 (TY)) interacts with ATP. Cys-150 and Cys-153 together coordinate Zn(2+). Residues Arg-160 and Arg-171 each coordinate AMP. Gln-199 is an ATP binding site.

The protein belongs to the adenylate kinase family. Monomer.

The protein resides in the cytoplasm. The catalysed reaction is AMP + ATP = 2 ADP. The protein operates within purine metabolism; AMP biosynthesis via salvage pathway; AMP from ADP: step 1/1. In terms of biological role, catalyzes the reversible transfer of the terminal phosphate group between ATP and AMP. Plays an important role in cellular energy homeostasis and in adenine nucleotide metabolism. This chain is Adenylate kinase, found in Geobacillus sp. (strain WCH70).